A 240-amino-acid polypeptide reads, in one-letter code: tRNA (guanine-N(1)-)-methyltransferase (240 aa).

Residues Gly-110 and Leu-129–Leu-134 contribute to the S-adenosyl-L-methionine site.

The protein belongs to the RNA methyltransferase TrmD family. In terms of assembly, homodimer.

The protein resides in the cytoplasm. It catalyses the reaction guanosine(37) in tRNA + S-adenosyl-L-methionine = N(1)-methylguanosine(37) in tRNA + S-adenosyl-L-homocysteine + H(+). Specifically methylates guanosine-37 in various tRNAs. The chain is tRNA (guanine-N(1)-)-methyltransferase from Clostridium botulinum (strain Langeland / NCTC 10281 / Type F).